We begin with the raw amino-acid sequence, 466 residues long: Cysteine--tRNA ligase (466 aa).

Zn(2+) is bound at residue Cys27. A 'HIGH' region motif is present at residues Pro29–Asn39. 3 residues coordinate Zn(2+): Cys207, His232, and Glu236. Positions Lys264 to Ser268 match the 'KMSKS' region motif. Lys267 serves as a coordination point for ATP.

Belongs to the class-I aminoacyl-tRNA synthetase family. In terms of assembly, monomer. Zn(2+) is required as a cofactor.

It localises to the cytoplasm. The enzyme catalyses tRNA(Cys) + L-cysteine + ATP = L-cysteinyl-tRNA(Cys) + AMP + diphosphate. The polypeptide is Cysteine--tRNA ligase (Thermoanaerobacter pseudethanolicus (strain ATCC 33223 / 39E) (Clostridium thermohydrosulfuricum)).